We begin with the raw amino-acid sequence, 294 residues long: ATP synthase gamma chain (294 aa).

It belongs to the ATPase gamma chain family. In terms of assembly, F-type ATPases have 2 components, CF(1) - the catalytic core - and CF(0) - the membrane proton channel. CF(1) has five subunits: alpha(3), beta(3), gamma(1), delta(1), epsilon(1). CF(0) has three main subunits: a, b and c.

The protein resides in the cell inner membrane. In terms of biological role, produces ATP from ADP in the presence of a proton gradient across the membrane. The gamma chain is believed to be important in regulating ATPase activity and the flow of protons through the CF(0) complex. In Rhizorhabdus wittichii (strain DSM 6014 / CCUG 31198 / JCM 15750 / NBRC 105917 / EY 4224 / RW1) (Sphingomonas wittichii), this protein is ATP synthase gamma chain.